Consider the following 328-residue polypeptide: Fructosamine deglycase FrlB (328 aa).

SIS domains are found at residues phenylalanine 15 to asparagine 153 and asparagine 181 to glutamate 311.

Homooctamer.

In terms of biological role, catalyzes the conversion of a range of fructosamine 6-phosphates to glucose 6-phosphate and a free amino acid. This chain is Fructosamine deglycase FrlB (frlB), found in Bacillus subtilis (strain 168).